We begin with the raw amino-acid sequence, 228 residues long: UPF0758 protein CKR_0778 (228 aa).

Positions 106–228 (RICSPQDAAV…FISLKEKGIL (123 aa)) constitute an MPN domain. The Zn(2+) site is built by H177, H179, and D190. A JAMM motif motif is present at residues 177–190 (HNHPSGDPSPSNED).

This sequence belongs to the UPF0758 family.

The sequence is that of UPF0758 protein CKR_0778 from Clostridium kluyveri (strain NBRC 12016).